A 152-amino-acid chain; its full sequence is MIPTRCNEINGSRPSSLKLAGESHTIKKTSSCKSKPRPHGRASPVIIYAHSPKVIHTRAEDFMALVQRLTGLDEIIRRNTSESSSSVVTEEVNVGDDNTAAPFSQDRTQRQKLTDMPLFTPSSMTLFGSPTQLMYMSPNRTDSFRPLVFKSE.

The disordered stretch occupies residues Met-1–Ala-42. A chloroplast-targeting transit peptide spans Met-1–Arg-58. The short motif at Phe-62–Gly-71 is the VQ element. The interval Thr-80–Thr-108 is disordered. Low complexity predominate over residues Ser-81 to Val-92.

The protein localises to the plastid. Its subcellular location is the chloroplast. Functionally, may be involved in chloroplast development. The protein is VQ motif-containing protein 8, chloroplastic of Arabidopsis thaliana (Mouse-ear cress).